Reading from the N-terminus, the 320-residue chain is Mechanosensory protein 3 (320 aa).

2 LIM zinc-binding domains span residues 29 to 79 (CNCC…CSQH) and 89 to 145 (CAGC…CMTH). Positions 216 to 275 (RRGPRTTIKQNQLDVLNEMFSNTPKPSKHARAKKALETGLSMRVIQVWFQNRRSKERRLK) form a DNA-binding region, homeobox.

It is found in the nucleus. Specifies differentiation of the set of six touch receptor neurons. Binds cooperatively as a heterodimer with unc-86 to sites in the mec-3 gene promoter. The sequence is that of Mechanosensory protein 3 (mec-3) from Caenorhabditis remanei (Caenorhabditis vulgaris).